The following is a 72-amino-acid chain: Translation initiation factor IF-1 (72 aa).

The S1-like domain maps to 1 to 72; sequence MAKEDVIEIE…TRGRITYRFK (72 aa).

Belongs to the IF-1 family. As to quaternary structure, component of the 30S ribosomal translation pre-initiation complex which assembles on the 30S ribosome in the order IF-2 and IF-3, IF-1 and N-formylmethionyl-tRNA(fMet); mRNA recruitment can occur at any time during PIC assembly.

It localises to the cytoplasm. One of the essential components for the initiation of protein synthesis. Stabilizes the binding of IF-2 and IF-3 on the 30S subunit to which N-formylmethionyl-tRNA(fMet) subsequently binds. Helps modulate mRNA selection, yielding the 30S pre-initiation complex (PIC). Upon addition of the 50S ribosomal subunit IF-1, IF-2 and IF-3 are released leaving the mature 70S translation initiation complex. This is Translation initiation factor IF-1 from Streptococcus mutans serotype c (strain ATCC 700610 / UA159).